Reading from the N-terminus, the 359-residue chain is DNA integrity scanning protein DisA (359 aa).

The 140-residue stretch at 7-146 (DDIFRATLAA…GRRYVLDGSA (140 aa)) folds into the DAC domain. ATP is bound by residues Gly-74, Leu-92, and 105 to 109 (TRHRT).

Belongs to the DisA family. Homooctamer. Requires Mg(2+) as cofactor.

The enzyme catalyses 2 ATP = 3',3'-c-di-AMP + 2 diphosphate. In terms of biological role, participates in a DNA-damage check-point that is active prior to asymmetric division when DNA is damaged. DisA forms globular foci that rapidly scan along the chromosomes during sporulation, searching for lesions. When a lesion is present, DisA pauses at the lesion site. This triggers a cellular response that culminates in a temporary block in sporulation initiation. Also has diadenylate cyclase activity, catalyzing the condensation of 2 ATP molecules into cyclic di-AMP (c-di-AMP). c-di-AMP acts as a signaling molecule that couples DNA integrity with progression of sporulation. The rise in c-di-AMP level generated by DisA while scanning the chromosome, operates as a positive signal that advances sporulation; upon encountering a lesion, the DisA focus arrests at the damaged site and halts c-di-AMP synthesis. The chain is DNA integrity scanning protein DisA from Frankia casuarinae (strain DSM 45818 / CECT 9043 / HFP020203 / CcI3).